The chain runs to 312 residues: MLTFQQIILTLQQYWDKQGCALLQPYDMEVGAGTSHTATFLRALGPEPWKAAYVQPSRRPKDGRYGDNPNRLQHYYQFQVVLKPAPGNILELYLGSLEALGFDLQQNDIRFVEDDWENPTLGAWGLGWEVWLNGMEVTQFTYFQQVGGINCRPITGEITYGLERLAMYLQGVENVYDLVYSKGVNGAPDLKYGDVFHQNEVEQSAYNFEHSDADFLFTAFNAHEKKAQELMEHKLALPAYEQVLKAAHTFNLLDARGAISVTERATYIGRIRNLARAVAASYLDSRARLGFPMAPKAWADEVLAELAKKAAA.

Belongs to the class-II aminoacyl-tRNA synthetase family. In terms of assembly, tetramer of two alpha and two beta subunits.

The protein localises to the cytoplasm. The enzyme catalyses tRNA(Gly) + glycine + ATP = glycyl-tRNA(Gly) + AMP + diphosphate. The polypeptide is Glycine--tRNA ligase alpha subunit (Methylobacillus flagellatus (strain ATCC 51484 / DSM 6875 / VKM B-1610 / KT)).